The primary structure comprises 688 residues: Envelope glycoprotein gp70 (688 aa).

Residues 1–15 (MPNHQSGSPTGSSDL) show a composition bias toward polar residues. Residues 1-31 (MPNHQSGSPTGSSDLLLSGKKQRPHLALRRK) are disordered. A signal peptide spans 1-98 (MPNHQSGSPT…SVLGPPPVTG (98 aa)). Positions 20–31 (KKQRPHLALRRK) are enriched in basic residues. Residues 99–624 (ESYWAYLPKP…ALNPLDWTQY (526 aa)) lie on the Extracellular side of the membrane. 2 N-linked (GlcNAc...) asparagine; by host glycosylation sites follow: Asn-127 and Asn-143. Residues 426–474 (LLPVDIGDEPWFDDSAIQTFRYATDLIRAKRFVAAIILGISALIAIITS) are a coiled coil. Residues 455–456 (KR) constitute a propeptide that is removed on maturation. Residues 457–477 (FVAAIILGISALIAIITSFAV) are fusion peptide. The immunosuppression stretch occupies residues 463-481 (LGISALIAIITSFAVATTA). Residue Asn-498 is glycosylated (N-linked (GlcNAc...) asparagine; by host). Residues 511–541 (LKLEARLNALEEVVLELGQDVANLKTRMSTR) are a coiled coil. Asn-557 carries an N-linked (GlcNAc...) asparagine; by host glycan. A helical membrane pass occupies residues 625–645 (FIFIGVGALLLVIVLMIFPIV). The Cytoplasmic segment spans residues 646–688 (FQCLAKSLDQVQSDLNVLLLKKKKGGNAAPAAEMVELPRVSYT).

As to quaternary structure, the mature envelope protein (Env) consists of a trimer of SU-TM heterodimers attached by noncovalent interactions or by a labile interchain disulfide bond. Post-translationally, specific enzymatic cleavages in vivo yield mature proteins. Envelope glycoproteins are synthesized as an inactive precursor that is N-glycosylated and processed likely by host cell furin or by a furin-like protease in the Golgi to yield the mature SU and TM proteins. The cleavage site between SU and TM requires the minimal sequence [KR]-X-[KR]-R.

It is found in the virion membrane. Its subcellular location is the host cell membrane. Its function is as follows. The surface protein (SU) attaches the virus to the host cell by binding to its receptor. This interaction triggers the refolding of the transmembrane protein (TM) and is thought to activate its fusogenic potential by unmasking its fusion peptide. Fusion occurs at the host cell plasma membrane. Functionally, the transmembrane protein (TM) acts as a class I viral fusion protein. Under the current model, the protein has at least 3 conformational states: pre-fusion native state, pre-hairpin intermediate state, and post-fusion hairpin state. During viral and target cell membrane fusion, the coiled coil regions (heptad repeats) assume a trimer-of-hairpins structure, positioning the fusion peptide in close proximity to the C-terminal region of the ectodomain. The formation of this structure appears to drive apposition and subsequent fusion of viral and target cell membranes. Membranes fusion leads to delivery of the nucleocapsid into the cytoplasm. The protein is Envelope glycoprotein gp70 (env) of Mus musculus (Mouse).